The following is a 150-amino-acid chain: Non-specific lipid transfer protein GPI-anchored 7 (150 aa).

An N-terminal signal peptide occupies residues 1-25 (MTKTMMIFAAAMTVMALLLVPTIEA). 4 disulfides stabilise this stretch: C29/C66, C36/C50, C51/C92, and C64/C101. N41, N79, and N93 each carry an N-linked (GlcNAc...) asparagine glycan. The interval 103–125 (AKGAPSPKASLPPPAPAGNTKKD) is disordered. Residue D125 is the site of GPI-anchor amidated aspartate attachment. Positions 126–150 (AGAGNKLAGYGVTTVILSLISSIFF) are cleaved as a propeptide — removed in mature form.

This sequence belongs to the plant LTP family. Up-regulated in the epidermis of stems.

The protein localises to the cell membrane. Functionally, probable lipid transfer protein. The chain is Non-specific lipid transfer protein GPI-anchored 7 from Arabidopsis thaliana (Mouse-ear cress).